The following is a 248-amino-acid chain: Killer cell lectin-like receptor subfamily I member 2 (248 aa).

The Cytoplasmic segment spans residues Met1–Gln79. The disordered stretch occupies residues Ile19–Glu44. The segment covering Glu28–Glu44 has biased composition (basic and acidic residues). Residues Met80–Ile100 traverse the membrane as a helical; Signal-anchor for type II membrane protein segment. At Pro101–Ile248 the chain is on the extracellular side. 3 disulfide bridges follow: Cys132–Cys145, Cys161–Cys244, and Cys223–Cys236. The C-type lectin domain occupies Phe139 to Glu245. N-linked (GlcNAc...) asparagine glycosylation is found at Asn197, Asn214, and Asn220.

In terms of assembly, heterodimer with KLRE1. In terms of tissue distribution, expressed in natural killer (NK) cells.

It localises to the cell membrane. Functionally, lectin-like receptor for natural killer (NK) cells. Heterodimer formation with KLRE1 mediates NK cell cytolytic activity. In Mus musculus (Mouse), this protein is Killer cell lectin-like receptor subfamily I member 2.